A 188-amino-acid chain; its full sequence is MDTGSANLTHHFLIAMPNMADPHFARTLTYIAEHSDQGALGLIINRPLDMTLETLFERVELPLEADGFAGQPVYFGGPVQTDRGFVLHRPAGDWHSTLRVNDDIALTSSRDILQSIGSSGEPQEVLISLGYAGWTAGQLEDELAQNAWLTVPADLGIIFDLPPEERLVAAMQKLGVDFAKLSEVAGHA.

The protein belongs to the UPF0301 (AlgH) family.

In Azoarcus sp. (strain BH72), this protein is UPF0301 protein azo3459.